Reading from the N-terminus, the 88-residue chain is Secretion system apparatus protein SsaS (88 aa).

The next 2 helical transmembrane spans lie at 15-35 and 55-75; these read WIVL…GVIV and LLAI…ILLN.

This sequence belongs to the FliQ/MopD/SpaQ family.

It is found in the cell membrane. Functionally, part of a type III secretion system. The protein is Secretion system apparatus protein SsaS (ssaS) of Salmonella typhimurium (strain LT2 / SGSC1412 / ATCC 700720).